The chain runs to 851 residues: Thrombospondin type-1 domain-containing protein 1 (851 aa).

The N-terminal stretch at 1–24 (MKPMLKDFSNLLLVVLCDYVLGEA) is a signal peptide. Residues 25-412 (EYLLLQEPVH…SPQDPVKSNN (388 aa)) lie on the Extracellular side of the membrane. 6 N-linked (GlcNAc...) asparagine glycosylation sites follow: asparagine 53, asparagine 58, asparagine 69, asparagine 110, asparagine 135, and asparagine 304. Positions 339 to 392 (IETWGPWQPWSPCSTTCGDAVRERRRLCVTSFPSRPSCSGMSSETSPCSLEECA) constitute a TSP type-1 domain. Cystine bridges form between cysteine 351/cysteine 386, cysteine 355/cysteine 391, and cysteine 366/cysteine 376. Residues 413 to 433 (VVTVTGISLCLFIIFATVLIT) form a helical membrane-spanning segment. Topologically, residues 434–851 (LWRRFGRAPK…STLSVEKLVI (418 aa)) are cytoplasmic. Serine 462 is modified (phosphoserine). Disordered stretches follow at residues 471-516 (SEPR…ESFQ), 626-646 (KSQI…HSRS), and 682-777 (SRMR…SSPI). A compositionally biased stretch (basic and acidic residues) spans 685–695 (RTWDQMEDRCR). Polar residues predominate over residues 765-776 (SHRSASRKQSSP).

Part of a complex composed of THSD1, PTK2/FAK1, TLN1 and VCL. Interacts with TLN1. As to expression, expressed in cerebral vascular endothelium.

It is found in the endosome membrane. The protein localises to the cell junction. Its subcellular location is the focal adhesion. In terms of biological role, is a positive regulator of nascent focal adhesion assembly, involved in the modulation of endothelial cell attachment to the extracellular matrix. This chain is Thrombospondin type-1 domain-containing protein 1 (Thsd1), found in Mus musculus (Mouse).